Reading from the N-terminus, the 942-residue chain is Protein inturned (942 aa).

Disordered stretches follow at residues 1 to 56 (MAGL…PEWL) and 128 to 156 (LPRRHHKKSSSNNGPVSILKHQSSQKTGV). Residues 22–32 (SQEEEEEEGDS) are compositionally biased toward acidic residues. The span at 33-48 (DAGASSLGSYSSASSD) shows a compositional bias: low complexity. Polar residues predominate over residues 137 to 156 (SSNNGPVSILKHQSSQKTGV). One can recognise a PDZ domain in the interval 185–267 (LLEVLVGIIH…PMQVKLTFEN (83 aa)). A phosphoserine mark is found at serine 674 and serine 678. Positions 707–751 (KARKPSPSRIGGGREPTEGEESAGLSPHATPDAVRKQRESEGSDD) are disordered.

The protein belongs to the inturned family. Component of the CPLANE (ciliogenesis and planar polarity effectors) complex, composed of INTU, FUZ and WDPCP. Interacts with CPLANE1. Interacts with NPHP4 and DAAM1; INTU is mediating the interaction between NPHP4 and DAAM1. Widely expressed in E8.5 and E9.5 wild type embryos. Present in various adult organs (at protein level).

It localises to the cytoplasm. The protein localises to the cell surface. It is found in the cytoskeleton. Its subcellular location is the cilium basal body. The protein resides in the microtubule organizing center. It localises to the centrosome. The protein localises to the centriole. Functionally, plays a key role in ciliogenesis and embryonic development. Regulator of cilia formation by controlling the organization of the apical actin cytoskeleton and the positioning of the basal bodies at the apical cell surface, which in turn is essential for the normal orientation of elongating ciliary microtubules. Plays a key role in definition of cell polarity via its role in ciliogenesis but not via conversion extension. Has an indirect effect on hedgehog signaling. Proposed to function as core component of the CPLANE (ciliogenesis and planar polarity effectors) complex involved in the recruitment of peripheral IFT-A proteins to basal bodies. Required for recruitment of CPLANE2 to the mother centriole. Binds phosphatidylinositol 3-phosphate with highest affinity, followed by phosphatidylinositol 4-phosphate and phosphatidylinositol 5-phosphate. In Mus musculus (Mouse), this protein is Protein inturned (Intu).